Reading from the N-terminus, the 134-residue chain is Large ribosomal subunit protein uL16c (134 aa).

Belongs to the universal ribosomal protein uL16 family. As to quaternary structure, part of the 50S ribosomal subunit.

The protein localises to the plastid. It is found in the chloroplast. This chain is Large ribosomal subunit protein uL16c, found in Atropa belladonna (Belladonna).